Reading from the N-terminus, the 168-residue chain is uncharacterized protein (168 aa).

An N-acetyltransferase domain is found at 7-168; the sequence is ERIDTLKTGD…TAKGWPDISM (162 aa).

This is an uncharacterized protein from Azospirillum brasilense.